The following is a 458-amino-acid chain: Argininosuccinate lyase (458 aa).

The protein belongs to the lyase 1 family. Argininosuccinate lyase subfamily.

It localises to the cytoplasm. The catalysed reaction is 2-(N(omega)-L-arginino)succinate = fumarate + L-arginine. Its pathway is amino-acid biosynthesis; L-arginine biosynthesis; L-arginine from L-ornithine and carbamoyl phosphate: step 3/3. This is Argininosuccinate lyase from Acetivibrio thermocellus (strain ATCC 27405 / DSM 1237 / JCM 9322 / NBRC 103400 / NCIMB 10682 / NRRL B-4536 / VPI 7372) (Clostridium thermocellum).